Consider the following 151-residue polypeptide: Ribosome maturation factor RimP (151 aa).

It belongs to the RimP family.

Its subcellular location is the cytoplasm. In terms of biological role, required for maturation of 30S ribosomal subunits. The protein is Ribosome maturation factor RimP of Synechocystis sp. (strain ATCC 27184 / PCC 6803 / Kazusa).